The sequence spans 286 residues: ATP synthase gamma chain (286 aa).

Belongs to the ATPase gamma chain family. As to quaternary structure, F-type ATPases have 2 components, CF(1) - the catalytic core - and CF(0) - the membrane proton channel. CF(1) has five subunits: alpha(3), beta(3), gamma(1), delta(1), epsilon(1). CF(0) has three main subunits: a, b and c.

It is found in the cell inner membrane. Produces ATP from ADP in the presence of a proton gradient across the membrane. The gamma chain is believed to be important in regulating ATPase activity and the flow of protons through the CF(0) complex. This is ATP synthase gamma chain from Pseudomonas fluorescens (strain SBW25).